The primary structure comprises 473 residues: tRNA modification GTPase MnmE (473 aa).

Positions 30, 95, and 134 each coordinate (6S)-5-formyl-5,6,7,8-tetrahydrofolate. In terms of domain architecture, TrmE-type G spans 230 to 394; it reads GVAAVIAGRP…LKSTMAGMVE (165 aa). GTP-binding positions include 240-245, 259-265, and 284-287; these read NAGKST, SHMPGTT, and DTAG. 2 residues coordinate Mg(2+): S244 and T265. K473 lines the (6S)-5-formyl-5,6,7,8-tetrahydrofolate pocket.

This sequence belongs to the TRAFAC class TrmE-Era-EngA-EngB-Septin-like GTPase superfamily. TrmE GTPase family. In terms of assembly, homodimer. Heterotetramer of two MnmE and two MnmG subunits. Requires K(+) as cofactor.

It is found in the cytoplasm. Exhibits a very high intrinsic GTPase hydrolysis rate. Involved in the addition of a carboxymethylaminomethyl (cmnm) group at the wobble position (U34) of certain tRNAs, forming tRNA-cmnm(5)s(2)U34. This Chlorobium phaeovibrioides (strain DSM 265 / 1930) (Prosthecochloris vibrioformis (strain DSM 265)) protein is tRNA modification GTPase MnmE.